A 515-amino-acid chain; its full sequence is Maturase K (515 aa).

This sequence belongs to the intron maturase 2 family. MatK subfamily.

It is found in the plastid. Its subcellular location is the chloroplast. Functionally, usually encoded in the trnK tRNA gene intron. Probably assists in splicing its own and other chloroplast group II introns. The polypeptide is Maturase K (Alpinia calcarata (Snap ginger)).